The following is a 355-amino-acid chain: Arginine kinase (355 aa).

The Phosphagen kinase N-terminal domain occupies 8-90 (KLQAGFKKLE…FDPIIEDYHV (83 aa)). Residue 63 to 67 (GVGIY) coordinates L-arginine. The 238-residue stretch at 118-355 (YVISTRVRCG…LQLIKMEKEM (238 aa)) folds into the Phosphagen kinase C-terminal domain. ATP-binding positions include 121–125 (STRVR) and histidine 184. Glutamate 224 provides a ligand contact to L-arginine. Arginine 228 serves as a coordination point for ATP. An L-arginine-binding site is contributed by cysteine 270. ATP contacts are provided by residues 279-283 (RASVH) and 308-313 (RGTRGE). Residue glutamate 313 coordinates L-arginine.

This sequence belongs to the ATP:guanido phosphotransferase family. Monomer.

It catalyses the reaction L-arginine + ATP = N(omega)-phospho-L-arginine + ADP + H(+). The chain is Arginine kinase from Penaeus japonicus (Kuruma prawn).